Here is a 369-residue protein sequence, read N- to C-terminus: MKSGRFIGVMSGTSLDGVDVVLATIDEHRVAQLASLSWPIPVSLKQAVLDICQGQQLTLSQFGQLDTQLGRLFADAVNALLKEQNLQARDIVAIGCHGQTVWHEPTGVAPHTLQIGDNNQIVARTGITVVGDFRRRDIALGGQGAPLVPAFHHALLAHPTERRMVLNIGGIANLSLLIPGQLVGGYDTGPGNMLMDAWIWRQAGKPYDKDAEWARAGKVILPLLQNMLSDPYFSQPAPKSTGREYFNYGWLERHLRHFPGVDPRDVQATLAELTAVTISEQVLLSGGCERLMVCGGGSRNPLLMARLAVLLLGTEVTTTDAVGISGDDMEALAFAWLAWRTLAGLPGNLPSVTGASQETVLGAIFPANS.

ATP is bound at residue 12–19 (GTSLDGVD).

The protein belongs to the anhydro-N-acetylmuramic acid kinase family.

The enzyme catalyses 1,6-anhydro-N-acetyl-beta-muramate + ATP + H2O = N-acetyl-D-muramate 6-phosphate + ADP + H(+). Its pathway is amino-sugar metabolism; 1,6-anhydro-N-acetylmuramate degradation. The protein operates within cell wall biogenesis; peptidoglycan recycling. In terms of biological role, catalyzes the specific phosphorylation of 1,6-anhydro-N-acetylmuramic acid (anhMurNAc) with the simultaneous cleavage of the 1,6-anhydro ring, generating MurNAc-6-P. Is required for the utilization of anhMurNAc either imported from the medium or derived from its own cell wall murein, and thus plays a role in cell wall recycling. The protein is Anhydro-N-acetylmuramic acid kinase of Shigella flexneri.